The chain runs to 241 residues: ATP synthase subunit a (241 aa).

6 consecutive transmembrane segments (helical) span residues 19 to 39, 80 to 100, 106 to 126, 135 to 155, 177 to 197, and 203 to 223; these read AVLI…AKMA, LVAA…IPGF, NINV…YEGI, FAHF…IEIV, LFLW…AYLL, and LLQT…AVAI.

It belongs to the ATPase A chain family. As to quaternary structure, F-type ATPases have 2 components, CF(1) - the catalytic core - and CF(0) - the membrane proton channel. CF(1) has five subunits: alpha(3), beta(3), gamma(1), delta(1), epsilon(1). CF(0) has three main subunits: a(1), b(2) and c(9-12). The alpha and beta chains form an alternating ring which encloses part of the gamma chain. CF(1) is attached to CF(0) by a central stalk formed by the gamma and epsilon chains, while a peripheral stalk is formed by the delta and b chains.

The protein localises to the cell inner membrane. In terms of biological role, key component of the proton channel; it plays a direct role in the translocation of protons across the membrane. This Sulfurovum sp. (strain NBC37-1) protein is ATP synthase subunit a.